An 80-amino-acid chain; its full sequence is Large ribosomal subunit protein bL31B (80 aa).

Belongs to the bacterial ribosomal protein bL31 family. Type B subfamily. As to quaternary structure, part of the 50S ribosomal subunit.

The sequence is that of Large ribosomal subunit protein bL31B from Xylella fastidiosa (strain M23).